A 275-amino-acid polypeptide reads, in one-letter code: Pantothenate synthetase (275 aa).

26 to 33 lines the ATP pocket; it reads MGNLHDGH. The Proton donor role is filled by H33. Q57 is a binding site for (R)-pantoate. Q57 lines the beta-alanine pocket. Residue 144–147 participates in ATP binding; that stretch reads GKKD. Q150 contributes to the (R)-pantoate binding site. ATP is bound by residues V173 and 181-184; that span reads LSSR.

The protein belongs to the pantothenate synthetase family. Homodimer.

It is found in the cytoplasm. It carries out the reaction (R)-pantoate + beta-alanine + ATP = (R)-pantothenate + AMP + diphosphate + H(+). Its pathway is cofactor biosynthesis; (R)-pantothenate biosynthesis; (R)-pantothenate from (R)-pantoate and beta-alanine: step 1/1. Catalyzes the condensation of pantoate with beta-alanine in an ATP-dependent reaction via a pantoyl-adenylate intermediate. This Azoarcus sp. (strain BH72) protein is Pantothenate synthetase.